Consider the following 451-residue polypeptide: Tubulin alpha-2 chain (451 aa).

Glutamine 11 is a binding site for GTP. Residue lysine 40 is modified to N6-acetyllysine. The GTP site is built by glutamate 71, serine 140, glycine 144, threonine 145, threonine 179, asparagine 206, and asparagine 228. Residue glutamate 71 participates in Mg(2+) binding. The active site involves glutamate 254. Positions tyrosine 432–tyrosine 451 are disordered.

Belongs to the tubulin family. Dimer of alpha and beta chains. A typical microtubule is a hollow water-filled tube with an outer diameter of 25 nm and an inner diameter of 15 nM. Alpha-beta heterodimers associate head-to-tail to form protofilaments running lengthwise along the microtubule wall with the beta-tubulin subunit facing the microtubule plus end conferring a structural polarity. Microtubules usually have 13 protofilaments but different protofilament numbers can be found in some organisms and specialized cells. It depends on Mg(2+) as a cofactor. Undergoes a tyrosination/detyrosination cycle, the cyclic removal and re-addition of a C-terminal tyrosine residue by the enzymes tubulin tyrosine carboxypeptidase (TTCP) and tubulin tyrosine ligase (TTL), respectively. In terms of processing, acetylation of alpha chains at Lys-40 stabilizes microtubules and affects affinity and processivity of microtubule motors. This modification has a role in multiple cellular functions, ranging from cell motility, cell cycle progression or cell differentiation to intracellular trafficking and signaling.

The protein resides in the cytoplasm. It localises to the cytoskeleton. It catalyses the reaction GTP + H2O = GDP + phosphate + H(+). Functionally, tubulin is the major constituent of microtubules, a cylinder consisting of laterally associated linear protofilaments composed of alpha- and beta-tubulin heterodimers. Microtubules grow by the addition of GTP-tubulin dimers to the microtubule end, where a stabilizing cap forms. Below the cap, tubulin dimers are in GDP-bound state, owing to GTPase activity of alpha-tubulin. The polypeptide is Tubulin alpha-2 chain (Homarus americanus (American lobster)).